The chain runs to 155 residues: Aspartate carbamoyltransferase regulatory chain (155 aa).

Cys-109, Cys-114, Cys-138, and Cys-141 together coordinate Zn(2+).

The protein belongs to the PyrI family. In terms of assembly, contains catalytic and regulatory chains. Zn(2+) is required as a cofactor.

Its function is as follows. Involved in allosteric regulation of aspartate carbamoyltransferase. The protein is Aspartate carbamoyltransferase regulatory chain of Vibrio cholerae serotype O1 (strain ATCC 39315 / El Tor Inaba N16961).